The sequence spans 221 residues: Translation initiation factor 6 (221 aa).

Belongs to the eIF-6 family.

In terms of biological role, binds to the 50S ribosomal subunit and prevents its association with the 30S ribosomal subunit to form the 70S initiation complex. The protein is Translation initiation factor 6 of Nitrosopumilus maritimus (strain SCM1).